The chain runs to 114 residues: Large ribosomal subunit protein uL18 (114 aa).

This sequence belongs to the universal ribosomal protein uL18 family. Part of the 50S ribosomal subunit; part of the 5S rRNA/L5/L18/L25 subcomplex. Contacts the 5S and 23S rRNAs.

Functionally, this is one of the proteins that bind and probably mediate the attachment of the 5S RNA into the large ribosomal subunit, where it forms part of the central protuberance. This is Large ribosomal subunit protein uL18 from Aster yellows phytoplasma.